The sequence spans 213 residues: Translation initiation factor IF-3 (213 aa).

Residues 178-213 (VKTLIKSEKPEKPEKPEKSEKTEKQGPSTPPAPSAS) are disordered. Over residues 182–201 (IKSEKPEKPEKPEKSEKTEK) the composition is skewed to basic and acidic residues.

Belongs to the IF-3 family. As to quaternary structure, monomer.

It localises to the cytoplasm. Functionally, IF-3 binds to the 30S ribosomal subunit and shifts the equilibrium between 70S ribosomes and their 50S and 30S subunits in favor of the free subunits, thus enhancing the availability of 30S subunits on which protein synthesis initiation begins. The sequence is that of Translation initiation factor IF-3 from Solibacter usitatus (strain Ellin6076).